Consider the following 262-residue polypeptide: Phosphatidylserine decarboxylase proenzyme (262 aa).

Residues Asp-86, His-142, and Ser-226 each act as charge relay system; for autoendoproteolytic cleavage activity in the active site. Ser-226 serves as the catalytic Schiff-base intermediate with substrate; via pyruvic acid; for decarboxylase activity. Ser-226 is subject to Pyruvic acid (Ser); by autocatalysis.

Belongs to the phosphatidylserine decarboxylase family. PSD-B subfamily. Prokaryotic type I sub-subfamily. Heterodimer of a large membrane-associated beta subunit and a small pyruvoyl-containing alpha subunit. Pyruvate is required as a cofactor. Is synthesized initially as an inactive proenzyme. Formation of the active enzyme involves a self-maturation process in which the active site pyruvoyl group is generated from an internal serine residue via an autocatalytic post-translational modification. Two non-identical subunits are generated from the proenzyme in this reaction, and the pyruvate is formed at the N-terminus of the alpha chain, which is derived from the carboxyl end of the proenzyme. The autoendoproteolytic cleavage occurs by a canonical serine protease mechanism, in which the side chain hydroxyl group of the serine supplies its oxygen atom to form the C-terminus of the beta chain, while the remainder of the serine residue undergoes an oxidative deamination to produce ammonia and the pyruvoyl prosthetic group on the alpha chain. During this reaction, the Ser that is part of the protease active site of the proenzyme becomes the pyruvoyl prosthetic group, which constitutes an essential element of the active site of the mature decarboxylase.

The protein localises to the cell membrane. It carries out the reaction a 1,2-diacyl-sn-glycero-3-phospho-L-serine + H(+) = a 1,2-diacyl-sn-glycero-3-phosphoethanolamine + CO2. It functions in the pathway phospholipid metabolism; phosphatidylethanolamine biosynthesis; phosphatidylethanolamine from CDP-diacylglycerol: step 2/2. Catalyzes the formation of phosphatidylethanolamine (PtdEtn) from phosphatidylserine (PtdSer). This is Phosphatidylserine decarboxylase proenzyme from Bacillus thuringiensis subsp. konkukian (strain 97-27).